The chain runs to 499 residues: Maturase K (499 aa).

Belongs to the intron maturase 2 family. MatK subfamily.

The protein resides in the plastid. It localises to the chloroplast. Its function is as follows. Usually encoded in the trnK tRNA gene intron. Probably assists in splicing its own and other chloroplast group II introns. The sequence is that of Maturase K from Neltuma juliflora (Mesquite).